A 151-amino-acid polypeptide reads, in one-letter code: uncharacterized protein (151 aa).

This is an uncharacterized protein from Homo sapiens (Human).